We begin with the raw amino-acid sequence, 679 residues long: Protein hook (679 aa).

The 118-residue stretch at 6 to 123 (NEMYYSLLEW…RLLQLVLGCA (118 aa)) folds into the Calponin-homology (CH) domain. Coiled coils occupy residues 135–437 (EIMC…LKCG) and 480–574 (QTAL…QEIL).

This sequence belongs to the hook family. Homodimer. Interacts with microtubules via its N-terminus.

Its subcellular location is the cytoplasm. It is found in the cytoskeleton. It localises to the endosome. The protein resides in the synapse. Involved in endocytic trafficking by stabilizing organelles of the endocytic pathway. Probably acts as a cytoskeletal linker protein required to tether endosome vesicles to the cytoskeleton. Involved in modulation of endocytosis at stages required for down-regulation of membrane proteins that control synapse size. Not involved in synaptic vesicle recycling. Required in R7 cells for boss endocytosis into multivesicular bodies (MVBs). Has a role in regulating adult longevity. The sequence is that of Protein hook from Drosophila sechellia (Fruit fly).